We begin with the raw amino-acid sequence, 221 residues long: Adenylate kinase (221 aa).

10-15 provides a ligand contact to ATP; it reads GAGKGT. Positions 30–59 are NMP; sequence STGDMLRAAVKAGTEFGVAAKKIMDAGGLV. AMP-binding positions include Thr31, Arg36, 57 to 59, 85 to 88, and Gln92; these read GLV and GFPR. The tract at residues 122 to 159 is LID; the sequence is GRRVHPASGRTYHIKYNPPKVEGKDDVTGDALIQRDDD. ATP contacts are provided by residues Arg123 and 132–133; that span reads TY. Residues Arg156 and Arg167 each contribute to the AMP site. ATP is bound at residue Gly207.

This sequence belongs to the adenylate kinase family. As to quaternary structure, monomer.

The protein localises to the cytoplasm. The enzyme catalyses AMP + ATP = 2 ADP. Its pathway is purine metabolism; AMP biosynthesis via salvage pathway; AMP from ADP: step 1/1. Catalyzes the reversible transfer of the terminal phosphate group between ATP and AMP. Plays an important role in cellular energy homeostasis and in adenine nucleotide metabolism. This chain is Adenylate kinase, found in Polynucleobacter asymbioticus (strain DSM 18221 / CIP 109841 / QLW-P1DMWA-1) (Polynucleobacter necessarius subsp. asymbioticus).